A 335-amino-acid chain; its full sequence is Ribosomal RNA large subunit methyltransferase F (335 aa).

The protein belongs to the methyltransferase superfamily. METTL16/RlmF family.

Its subcellular location is the cytoplasm. The catalysed reaction is adenosine(1618) in 23S rRNA + S-adenosyl-L-methionine = N(6)-methyladenosine(1618) in 23S rRNA + S-adenosyl-L-homocysteine + H(+). Its function is as follows. Specifically methylates the adenine in position 1618 of 23S rRNA. This chain is Ribosomal RNA large subunit methyltransferase F, found in Yersinia enterocolitica serotype O:8 / biotype 1B (strain NCTC 13174 / 8081).